The following is a 508-amino-acid chain: E3 ubiquitin-protein ligase XBAT32 (508 aa).

ANK repeat units lie at residues 50–79, 83–112, 117–147, 177–206, and 220–249; these read VRNS…DINL, RGQT…NIHR, NGGT…SVPN, GGIT…SVTQ, and AGST…CLAA. The segment at 321 to 372 adopts an RING-type zinc-finger fold; sequence CAVCLERKCTVAADGCAHEFCTNCALYLSTTSITSSKTSNVTPGSVPCPLCR.

Interacts with ACS4 and ACS7. Expressed in the vascular system of primary root, vascular tissue of leaves, stems and anthers.

It catalyses the reaction S-ubiquitinyl-[E2 ubiquitin-conjugating enzyme]-L-cysteine + [acceptor protein]-L-lysine = [E2 ubiquitin-conjugating enzyme]-L-cysteine + N(6)-ubiquitinyl-[acceptor protein]-L-lysine.. The protein operates within protein modification; protein ubiquitination. Functionally, E3 ubiquitin-protein ligase that mediates ubiquitination of ACC synthases (ACS). Negatively regulates ethylene biosynthesis probably via ubiquitin-dependent degradation of ACS4 and ACS7 enzymes. Regulates lateral root formation and development by controlling ethylene production which inhibits lateral root formation at high concentration. The polypeptide is E3 ubiquitin-protein ligase XBAT32 (XBAT32) (Arabidopsis thaliana (Mouse-ear cress)).